A 108-amino-acid chain; its full sequence is Movement protein TGB2 (108 aa).

Topologically, residues 1–14 (MPLTPPPDHSITYR) are cytoplasmic. Residues 15–31 (ILAVGLCSCCAIYAATR) form a helical membrane-spanning segment. Residues 32–67 (STLPHTGDNLHSLPYGGKYSDGTKSICYSGPGPTPD) are Lumenal-facing. Residues 68–85 (IPTHLPALLVLVLVVAIY) form a helical membrane-spanning segment. The Cytoplasmic portion of the chain corresponds to 86 to 108 (ASSRLDFSVNYRCSCRVHNRSGQ).

Belongs to the Tymovirales TGBp2 protein family.

The protein resides in the host endoplasmic reticulum membrane. Plays a role in viral cell-to-cell propagation, by facilitating genome transport to neighboring plant cells through plasmosdesmata,. The polypeptide is Movement protein TGB2 (Strawberry mild yellow edge-associated virus (SMYEaV)).